The sequence spans 425 residues: Histidine--tRNA ligase (425 aa).

The protein belongs to the class-II aminoacyl-tRNA synthetase family. In terms of assembly, homodimer.

The protein resides in the cytoplasm. The enzyme catalyses tRNA(His) + L-histidine + ATP = L-histidyl-tRNA(His) + AMP + diphosphate + H(+). The polypeptide is Histidine--tRNA ligase (Shewanella sp. (strain MR-4)).